The following is a 216-amino-acid chain: Probable disulfide bond formation protein D (216 aa).

A signal peptide spans 1-25 (MKSNKLMALGIVFSIAVLIVIGTIA). C65 and C68 are oxidised to a cystine.

This sequence belongs to the thioredoxin family. DsbA subfamily.

Functionally, may be required for disulfide bond formation in some proteins. The sequence is that of Probable disulfide bond formation protein D (bdbD) from Bacillus cereus (strain ATCC 14579 / DSM 31 / CCUG 7414 / JCM 2152 / NBRC 15305 / NCIMB 9373 / NCTC 2599 / NRRL B-3711).